The following is a 700-amino-acid chain: Peroxisomal acyl-coenzyme A oxidase 1 (700 aa).

FAD contacts are provided by residues Thr147, Gly186, and 412–417 (CGGHGY). Glu437 serves as the catalytic Proton acceptor. Positions 698 to 700 (SKL) match the Microbody targeting signal motif.

This sequence belongs to the acyl-CoA oxidase family. The cofactor is FAD.

Its subcellular location is the peroxisome. The enzyme catalyses a 2,3-saturated acyl-CoA + O2 = a (2E)-enoyl-CoA + H2O2. In terms of biological role, catalyzes the desaturation of acyl-CoAs to 2-trans-enoyl-CoAs. First enzyme of the fatty acid beta-oxidation pathway. The protein is Peroxisomal acyl-coenzyme A oxidase 1 (acox1) of Dictyostelium discoideum (Social amoeba).